A 72-amino-acid chain; its full sequence is Guanine nucleotide-binding protein G(I)/G(S)/G(O) subunit gamma-12 (72 aa).

Position 2 is an N-acetylserine (serine 2). A phosphoserine mark is found at serine 10 and serine 26. Tyrosine 42 carries the post-translational modification Phosphotyrosine. A Phosphoserine modification is found at serine 49. A Cysteine methyl ester modification is found at cysteine 69. Residue cysteine 69 is the site of S-geranylgeranyl cysteine attachment. The propeptide at 70–72 (IIL) is removed in mature form.

The protein belongs to the G protein gamma family. As to quaternary structure, g proteins are composed of 3 units, alpha, beta and gamma.

Its subcellular location is the cell membrane. Its function is as follows. Guanine nucleotide-binding proteins (G proteins) are involved as a modulator or transducer in various transmembrane signaling systems. The beta and gamma chains are required for the GTPase activity, for replacement of GDP by GTP, and for G protein-effector interaction. The sequence is that of Guanine nucleotide-binding protein G(I)/G(S)/G(O) subunit gamma-12 (Gng12) from Mus musculus (Mouse).